Reading from the N-terminus, the 851-residue chain is B-box type zinc finger protein ncl-1 (851 aa).

The segment at 71-91 (GFGFGSPSSTTSSSPPLSNSP) is disordered. A compositionally biased stretch (low complexity) spans 76–91 (SPSSTTSSSPPLSNSP). The B box-type 1; atypical zinc finger occupies 127–174 (VPAVHCSGCKSNETATSFCQDCNANLCDNCTMAHKFMHCFADHRVVSL). Zn(2+) is bound by residues C132, C135, C156, and H160. Low complexity predominate over residues 176–197 (TPGTGSSSSSTSSSSSASSTSS). The tract at residues 176-211 (TPGTGSSSSSTSSSSSASSTSSHQVPSLGGKQSPDS) is disordered. Residues 218–261 (KRSVLCLQHRASELVFFCVSCNLAICRDCTVSDHPSGTHQYELI) form a B box-type 2 zinc finger. Zn(2+) is bound by residues C223, H226, C246, and H251. Residues 303–331 (SLHNAHAQLEETVSNLINVIQDQKKTLAK) adopt a coiled-coil conformation. 5 NHL repeats span residues 573 to 616 (HCKF…FDKE), 620 to 665 (KFQF…YNQY), 666 to 707 (GQFL…FDMF), 708 to 750 (GNIL…FSYE), and 751 to 794 (GQYL…FSQD).

As to expression, present in cells in which nucleoli are absent, and absent from large cells in which nucleoli are prominent. Highly expressed in the gonads.

The protein resides in the cytoplasm. In terms of biological role, translational repressor that inhibits protein synthesis. Represses the translation of mRNAs such as fib-1, probably by being recruited by RNA-binding protein nos-2 and the Pumilio proteins puf-5, puf-8 and puf-9 to the consensus core PUF binding motif in the 3'-UTR of fib-1 mRNA. Negatively regulates ribosomal RNA (rRNA) synthesis, ribosomal protein synthesis and nucleolus size. Its role in the negative regulation of nucleolus size is most likely through its negative regulation of the translation of proteins such as the rRNA 2'-O-methyltransferase fib-1, and dao-5. Might act directly as a transcription factor to inhibit RNA polymerase I (rRNA) and III (5S RNA) transcription. Plays a role in embryonic development, and in particular, is involved in regulating the localization of proteins, such as par-2, that are required for embryonic cell polarity. Plays a role in the regulation of lifespan, and the response to nutrient availability. This Caenorhabditis elegans protein is B-box type zinc finger protein ncl-1.